The following is a 101-amino-acid chain: Small ribosomal subunit protein uS14 (101 aa).

The protein belongs to the universal ribosomal protein uS14 family. In terms of assembly, part of the 30S ribosomal subunit. Contacts proteins S3 and S10.

In terms of biological role, binds 16S rRNA, required for the assembly of 30S particles and may also be responsible for determining the conformation of the 16S rRNA at the A site. This is Small ribosomal subunit protein uS14 from Hyphomonas neptunium (strain ATCC 15444).